A 320-amino-acid polypeptide reads, in one-letter code: Lipoyl synthase (320 aa).

Positions 1–24 are enriched in basic and acidic residues; sequence MIGKLVRDLKIPDQRHPEKAHRPD. The tract at residues 1–30 is disordered; it reads MIGKLVRDLKIPDQRHPEKAHRPDNVQPKK. Positions 60, 65, 71, 86, 90, 93, and 300 each coordinate [4Fe-4S] cluster. One can recognise a Radical SAM core domain in the interval 72 to 289; that stretch reads WSQGHATMMI…EKAAYGKGFL (218 aa).

This sequence belongs to the radical SAM superfamily. Lipoyl synthase family. The cofactor is [4Fe-4S] cluster.

The protein localises to the cytoplasm. It catalyses the reaction [[Fe-S] cluster scaffold protein carrying a second [4Fe-4S](2+) cluster] + N(6)-octanoyl-L-lysyl-[protein] + 2 oxidized [2Fe-2S]-[ferredoxin] + 2 S-adenosyl-L-methionine + 4 H(+) = [[Fe-S] cluster scaffold protein] + N(6)-[(R)-dihydrolipoyl]-L-lysyl-[protein] + 4 Fe(3+) + 2 hydrogen sulfide + 2 5'-deoxyadenosine + 2 L-methionine + 2 reduced [2Fe-2S]-[ferredoxin]. It functions in the pathway protein modification; protein lipoylation via endogenous pathway; protein N(6)-(lipoyl)lysine from octanoyl-[acyl-carrier-protein]: step 2/2. Functionally, catalyzes the radical-mediated insertion of two sulfur atoms into the C-6 and C-8 positions of the octanoyl moiety bound to the lipoyl domains of lipoate-dependent enzymes, thereby converting the octanoylated domains into lipoylated derivatives. The polypeptide is Lipoyl synthase (Cereibacter sphaeroides (strain ATCC 17029 / ATH 2.4.9) (Rhodobacter sphaeroides)).